The sequence spans 247 residues: 4-hydroxy-tetrahydrodipicolinate reductase (247 aa).

NAD(+) is bound by residues 9-14 (GAAGRM), 76-78 (GTT), and 103-106 (APNF). Catalysis depends on His-133, which acts as the Proton donor/acceptor. His-134 provides a ligand contact to (S)-2,3,4,5-tetrahydrodipicolinate. Catalysis depends on Lys-137, which acts as the Proton donor. Residue 143-144 (GT) participates in (S)-2,3,4,5-tetrahydrodipicolinate binding.

This sequence belongs to the DapB family.

It localises to the cytoplasm. The enzyme catalyses (S)-2,3,4,5-tetrahydrodipicolinate + NAD(+) + H2O = (2S,4S)-4-hydroxy-2,3,4,5-tetrahydrodipicolinate + NADH + H(+). It carries out the reaction (S)-2,3,4,5-tetrahydrodipicolinate + NADP(+) + H2O = (2S,4S)-4-hydroxy-2,3,4,5-tetrahydrodipicolinate + NADPH + H(+). It participates in amino-acid biosynthesis; L-lysine biosynthesis via DAP pathway; (S)-tetrahydrodipicolinate from L-aspartate: step 4/4. Functionally, catalyzes the conversion of 4-hydroxy-tetrahydrodipicolinate (HTPA) to tetrahydrodipicolinate. The sequence is that of 4-hydroxy-tetrahydrodipicolinate reductase from Beutenbergia cavernae (strain ATCC BAA-8 / DSM 12333 / CCUG 43141 / JCM 11478 / NBRC 16432 / NCIMB 13614 / HKI 0122).